The sequence spans 303 residues: ATP-dependent (S)-NAD(P)H-hydrate dehydratase (303 aa).

Residues 12–299 (QQQLVCSVIP…AEVRTAFSML (288 aa)) form the YjeF C-terminal domain. (6S)-NADPHX-binding positions include glycine 106 and 158–164 (NAVELDR). Residues 194-198 (KGSED) and 213-222 (GSPRRCGGQG) contribute to the ATP site. Residue aspartate 223 coordinates (6S)-NADPHX.

This sequence belongs to the NnrD/CARKD family. The cofactor is Mg(2+).

The catalysed reaction is (6S)-NADHX + ATP = ADP + phosphate + NADH + H(+). It catalyses the reaction (6S)-NADPHX + ATP = ADP + phosphate + NADPH + H(+). Catalyzes the dehydration of the S-form of NAD(P)HX at the expense of ATP, which is converted to ADP. Together with NAD(P)HX epimerase, which catalyzes the epimerization of the S- and R-forms, the enzyme allows the repair of both epimers of NAD(P)HX, a damaged form of NAD(P)H that is a result of enzymatic or heat-dependent hydration. In Ixodes scapularis (Black-legged tick), this protein is ATP-dependent (S)-NAD(P)H-hydrate dehydratase.